A 359-amino-acid chain; its full sequence is Chorismate synthase (359 aa).

An NADP(+)-binding site is contributed by Arg47. Residues 123–125 (RSS), Gly283, 298–302 (KPTSS), and Arg326 each bind FMN.

The protein belongs to the chorismate synthase family. Homotetramer. The cofactor is FMNH2.

The enzyme catalyses 5-O-(1-carboxyvinyl)-3-phosphoshikimate = chorismate + phosphate. It participates in metabolic intermediate biosynthesis; chorismate biosynthesis; chorismate from D-erythrose 4-phosphate and phosphoenolpyruvate: step 7/7. In terms of biological role, catalyzes the anti-1,4-elimination of the C-3 phosphate and the C-6 proR hydrogen from 5-enolpyruvylshikimate-3-phosphate (EPSP) to yield chorismate, which is the branch point compound that serves as the starting substrate for the three terminal pathways of aromatic amino acid biosynthesis. This reaction introduces a second double bond into the aromatic ring system. This chain is Chorismate synthase, found in Chlamydia caviae (strain ATCC VR-813 / DSM 19441 / 03DC25 / GPIC) (Chlamydophila caviae).